An 893-amino-acid chain; its full sequence is DNA gyrase subunit A (893 aa).

A Topo IIA-type catalytic domain is found at 35-501 (LPDVRDGLKP…GLEDLEDEDL (467 aa)). Y123 (O-(5'-phospho-DNA)-tyrosine intermediate) is an active-site residue. The short motif at 528-534 (QNRGGRG) is the GyrA-box element. Residues 810-893 (VNEEDDNEEN…ASDNEEDSDE (84 aa)) form a disordered region. 2 stretches are compositionally biased toward acidic residues: residues 812 to 821 (EEDDNEENAD) and 852 to 862 (DAEMESVESPE). The segment covering 863–879 (NDDRIDIRQDFMDRVNE) has biased composition (basic and acidic residues). Positions 880 to 893 (DIESASDNEEDSDE) are enriched in acidic residues.

Belongs to the type II topoisomerase GyrA/ParC subunit family. Heterotetramer, composed of two GyrA and two GyrB chains. In the heterotetramer, GyrA contains the active site tyrosine that forms a transient covalent intermediate with DNA, while GyrB binds cofactors and catalyzes ATP hydrolysis.

It localises to the cytoplasm. The enzyme catalyses ATP-dependent breakage, passage and rejoining of double-stranded DNA.. A type II topoisomerase that negatively supercoils closed circular double-stranded (ds) DNA in an ATP-dependent manner to modulate DNA topology and maintain chromosomes in an underwound state. Negative supercoiling favors strand separation, and DNA replication, transcription, recombination and repair, all of which involve strand separation. Also able to catalyze the interconversion of other topological isomers of dsDNA rings, including catenanes and knotted rings. Type II topoisomerases break and join 2 DNA strands simultaneously in an ATP-dependent manner. This Staphylococcus epidermidis (strain ATCC 35984 / DSM 28319 / BCRC 17069 / CCUG 31568 / BM 3577 / RP62A) protein is DNA gyrase subunit A.